We begin with the raw amino-acid sequence, 490 residues long: ATP-dependent 6-phosphofructokinase (490 aa).

ATP is bound by residues Gly109, 175 to 176, and 200 to 203; these read RG and GDGT. Asp201 lines the Mg(2+) pocket. Substrate contacts are provided by residues 229 to 231, 274 to 276, Glu327, and 383 to 386; these read TID, MGR, and YMIR. The Proton acceptor role is filled by Asp231. A Peroxisomal targeting signal motif is present at residues 488 to 490; sequence SKL.

Belongs to the phosphofructokinase type A (PFKA) family. PPi-dependent PFK group II subfamily. Atypical ATP-dependent clade 'X' sub-subfamily. As to quaternary structure, homotetramer. The cofactor is Mg(2+).

Its subcellular location is the glycosome. It carries out the reaction beta-D-fructose 6-phosphate + ATP = beta-D-fructose 1,6-bisphosphate + ADP + H(+). It functions in the pathway carbohydrate degradation; glycolysis; D-glyceraldehyde 3-phosphate and glycerone phosphate from D-glucose: step 3/4. Allosterically activated by AMP. Its function is as follows. Catalyzes the phosphorylation of D-fructose 6-phosphate to fructose 1,6-bisphosphate by ATP, the first committing step of glycolysis. The chain is ATP-dependent 6-phosphofructokinase from Trypanoplasma borreli.